We begin with the raw amino-acid sequence, 57 residues long: UPF0391 membrane protein RPB_2510 (57 aa).

A run of 2 helical transmembrane segments spans residues 6–26 (WALI…TGIS) and 35–55 (ILFY…FTIF).

It belongs to the UPF0391 family.

Its subcellular location is the cell membrane. The polypeptide is UPF0391 membrane protein RPB_2510 (Rhodopseudomonas palustris (strain HaA2)).